The sequence spans 138 residues: Gastrula zinc finger protein XlCGF44.2 (138 aa).

5 C2H2-type zinc fingers span residues 5-27, 32-54, 60-82, 88-110, and 116-138; these read FACT…KRIH, FVCA…QRLH, FTCT…QQIH, YVCS…MKTH, and FACS…QESH.

This sequence belongs to the krueppel C2H2-type zinc-finger protein family.

The protein localises to the nucleus. Its function is as follows. May be involved in transcriptional regulation. The sequence is that of Gastrula zinc finger protein XlCGF44.2 from Xenopus laevis (African clawed frog).